The sequence spans 438 residues: V-type ATP synthase beta chain (438 aa).

This sequence belongs to the ATPase alpha/beta chains family.

Its function is as follows. Produces ATP from ADP in the presence of a proton gradient across the membrane. The V-type beta chain is a regulatory subunit. This chain is V-type ATP synthase beta chain, found in Chlamydia abortus (strain DSM 27085 / S26/3) (Chlamydophila abortus).